The following is a 418-amino-acid chain: STE20-related kinase adapter protein beta (418 aa).

Residues 58–369 (YELQVEIGRG…ASSLLSHVFF (312 aa)) enclose the Protein kinase domain. ATP-binding positions include 64–72 (IGRGFDNLT) and lysine 89.

It belongs to the protein kinase superfamily. STE Ser/Thr protein kinase family. STE20 subfamily. Component of a trimeric complex composed of STK11/LKB1, STRAD (STRADA or STRADB) and CAB39/MO25 (CAB39/MO25alpha or CAB39L/MO25beta): the complex tethers STK11/LKB1 in the cytoplasm and stimulates its catalytic activity. Interacts with BIRC4/XIAP. These two proteins are likely to coexist in a complex with TAK1, TRAF6, TAB1 and TAB2.

It is found in the nucleus. The protein localises to the cytoplasm. Its function is as follows. Pseudokinase which, in complex with CAB39/MO25 (CAB39/MO25alpha or CAB39L/MO25beta), binds to and activates STK11/LKB1. Adopts a closed conformation typical of active protein kinases and binds STK11/LKB1 as a pseudosubstrate, promoting conformational change of STK11/LKB1 in an active conformation. This is STE20-related kinase adapter protein beta (Stradb) from Mus musculus (Mouse).